We begin with the raw amino-acid sequence, 453 residues long: Bifunctional protein GlmU (453 aa).

The pyrophosphorylase stretch occupies residues 1-225 (MHAHVILAAG…AEEALGVNTR (225 aa)). Residues 7–10 (LAAG), Lys21, Gln72, and 77–78 (GT) contribute to the UDP-N-acetyl-alpha-D-glucosamine site. Asp102 contributes to the Mg(2+) binding site. The UDP-N-acetyl-alpha-D-glucosamine site is built by Gly138, Glu152, Asn167, and Asn223. Residue Asn223 coordinates Mg(2+). Positions 226-246 (EELARVEGVLLRRLRAEWMGK) are linker. The segment at 247 to 453 (GVRMILPETI…GYALRKLGEG (207 aa)) is N-acetyltransferase. UDP-N-acetyl-alpha-D-glucosamine is bound by residues Arg329 and Lys347. Residue His359 is the Proton acceptor of the active site. UDP-N-acetyl-alpha-D-glucosamine contacts are provided by Tyr362 and Asn373. Residues Ala376, 382–383 (NY), Ser401, Ala419, and Arg436 each bind acetyl-CoA.

In the N-terminal section; belongs to the N-acetylglucosamine-1-phosphate uridyltransferase family. This sequence in the C-terminal section; belongs to the transferase hexapeptide repeat family. Homotrimer. Mg(2+) is required as a cofactor.

The protein resides in the cytoplasm. The catalysed reaction is alpha-D-glucosamine 1-phosphate + acetyl-CoA = N-acetyl-alpha-D-glucosamine 1-phosphate + CoA + H(+). The enzyme catalyses N-acetyl-alpha-D-glucosamine 1-phosphate + UTP + H(+) = UDP-N-acetyl-alpha-D-glucosamine + diphosphate. Its pathway is nucleotide-sugar biosynthesis; UDP-N-acetyl-alpha-D-glucosamine biosynthesis; N-acetyl-alpha-D-glucosamine 1-phosphate from alpha-D-glucosamine 6-phosphate (route II): step 2/2. It functions in the pathway nucleotide-sugar biosynthesis; UDP-N-acetyl-alpha-D-glucosamine biosynthesis; UDP-N-acetyl-alpha-D-glucosamine from N-acetyl-alpha-D-glucosamine 1-phosphate: step 1/1. It participates in bacterial outer membrane biogenesis; LPS lipid A biosynthesis. Catalyzes the last two sequential reactions in the de novo biosynthetic pathway for UDP-N-acetylglucosamine (UDP-GlcNAc). The C-terminal domain catalyzes the transfer of acetyl group from acetyl coenzyme A to glucosamine-1-phosphate (GlcN-1-P) to produce N-acetylglucosamine-1-phosphate (GlcNAc-1-P), which is converted into UDP-GlcNAc by the transfer of uridine 5-monophosphate (from uridine 5-triphosphate), a reaction catalyzed by the N-terminal domain. The sequence is that of Bifunctional protein GlmU from Thermus thermophilus (strain ATCC 27634 / DSM 579 / HB8).